Reading from the N-terminus, the 371-residue chain is Aromatic peroxygenase (371 aa).

The signal sequence occupies residues 1 to 18; sequence MKYFPLFPTLVFAARVVA. Residues 19-43 constitute a propeptide that is removed on maturation; that stretch reads FPAYASLAGLSQQELDAIIPTLEAR. An N-linked (GlcNAc...) asparagine glycan is attached at N54. C79 is a binding site for heme. 4 N-linked (GlcNAc...) asparagine glycosylation sites follow: N184, N204, N225, and N329. A disulfide bond links C321 and C362.

Belongs to the chloroperoxidase family. Heme b serves as cofactor. In terms of processing, N-glycosylated.

The catalysed reaction is RH + H2O2 = ROH + H2O.. In terms of biological role, aromatic peroxidase that oxidizes aryl alcohols into the corresponding aldehydes and then into the corresponding benzoic acids. Oxidizes toluene and naphthalene. Catalyzes the regioselective peroxide-dependent hydroxylation of propranolol and diclofenac to 5-hydroxypropranolol and 4'-hydroxydiclofenac. Catalyzes the regioselective peroxide-dependent hydroxylation of naphthalene to 1-naphthol or 2-naphthol via a naphthalene 1,2-oxide intermediate. Catalyzes the regioselective peroxide-dependent oxidation of pyridine to pyridine N-oxide. Halogenates monochlorodimedone and phenol. Oxidizes the sulfur-containing heterocycle dibenzothiophene to yield ring-hydroxylation products and to a lesser extent sulfoxidation products. The protein is Aromatic peroxygenase of Cyclocybe aegerita (Black poplar mushroom).